The following is a 396-amino-acid chain: MAKAKFERLKPHVNVGTIGHVDHGKTTLTAAIATVAAITSGGEAKDYASIDSAPEEKARGITINTSHVEYDTPSRHYAHVDCPGHADYVKNMITGAAQMDGAILVVSATDGPMPQTREHILLSRQVGVPYIVVFMNKCDVVDDEELLELVEMEVRELLSDYDFPGDDTPIIHGSATEALKGSQEKYGQPAVVELLNVLDTYIPEPERDIDKAFLMPIEDVFSISGRGTVVTGRVESGIVRVGEEIEIVGIRDTQKTTCTGVEMFRKLLDEGRAGENCGVLLRGTKREDVQRGQVLAKPGSITPHTKFDAEVYVLSKEEGGRHTPFLNGYRPQFYFRTTDVTGAIQLQDGTEMVMPGDNVEMGVELIHPIAMDKGLRFAIREGGRTVGAGVVANVHV.

One can recognise a tr-type G domain in the interval 10-206 (KPHVNVGTIG…VLDTYIPEPE (197 aa)). Positions 19–26 (GHVDHGKT) are G1. Position 19-26 (19-26 (GHVDHGKT)) interacts with GTP. Residue T26 participates in Mg(2+) binding. Residues 60–64 (GITIN) are G2. The interval 81 to 84 (DCPG) is G3. GTP-binding positions include 81–85 (DCPGH) and 136–139 (NKCD). The tract at residues 136–139 (NKCD) is G4. A G5 region spans residues 174-176 (SAT).

The protein belongs to the TRAFAC class translation factor GTPase superfamily. Classic translation factor GTPase family. EF-Tu/EF-1A subfamily. In terms of assembly, monomer.

The protein localises to the cytoplasm. The enzyme catalyses GTP + H2O = GDP + phosphate + H(+). GTP hydrolase that promotes the GTP-dependent binding of aminoacyl-tRNA to the A-site of ribosomes during protein biosynthesis. The chain is Elongation factor Tu from Psychrobacter arcticus (strain DSM 17307 / VKM B-2377 / 273-4).